A 113-amino-acid chain; its full sequence is Thioredoxin H-type (113 aa).

The region spanning Gly2–Ala112 is the Thioredoxin domain. Active-site nucleophile residues include Cys37 and Cys40. A disulfide bridge connects residues Cys37 and Cys40.

It belongs to the thioredoxin family. Plant H-type subfamily.

It localises to the cytoplasm. Functionally, participates in various redox reactions through the reversible oxidation of the active center dithiol to a disulfide. The H form is known to activate a number of cytosolic enzymes. This is Thioredoxin H-type (TRXH) from Chlamydomonas reinhardtii (Chlamydomonas smithii).